A 377-amino-acid chain; its full sequence is DAR GTPase 2, mitochondrial (377 aa).

The N-terminal 21 residues, 1–21 (MATAKTWKIAREIGDAVIKAS), are a transit peptide targeting the mitochondrion. A CP-type G domain is found at 34-211 (AAAVRAISER…VLDTPGIFPP (178 aa)). Residues 55 to 59 (DARIP) carry the DARXP motif motif. GTP is bound by residues 82–85 (NKME), 110–111 (NS), 150–155 (NVGKSA), and Gly207.

It belongs to the TRAFAC class YlqF/YawG GTPase family. MTG1 subfamily.

Its subcellular location is the mitochondrion. Functionally, GTPase that may function in mitochondrial ribosome assembly. This is DAR GTPase 2, mitochondrial from Arabidopsis thaliana (Mouse-ear cress).